Here is a 281-residue protein sequence, read N- to C-terminus: uncharacterized protein (281 aa).

It is found in the plastid. The protein localises to the chloroplast. This is an uncharacterized protein from Euglena gracilis.